The following is a 557-amino-acid chain: Tektin-5 (557 aa).

Residues 302-386 (DNIRHAQNMR…LLERAIVAKE (85 aa)) are a coiled coil. 6 tandem repeats follow at residues 507-512 (CSGSAL), 513-518 (CKGPAS), 519-524 (CGGGAS), 525-530 (CGGGAS), 531-536 (CGGHAP), and 537-541 (CGSAL). Residues 507 to 541 (CSGSALCKGPASCGGGASCGGGASCGGHAPCGSAL) form a 6 X 6 AA approximate tandem repeats of C-[GSK]-G-[GSPH]-A-[SLP] region.

It belongs to the tektin family. As to quaternary structure, microtubule inner protein component of sperm flagellar doublet microtubules. Interacts with TEKT3. In terms of processing, ubiquitinated, leading to its degradation. Deubiquitinated by USP16, promoting its stability. In terms of tissue distribution, strongly expressed in germ cells of the testis (at protein level). Expressed in spermatozoa. Also detected in brain.

The protein localises to the cytoplasm. It localises to the cytoskeleton. It is found in the flagellum axoneme. Functionally, sperm-specific microtubule inner protein (MIP) part of the dynein-decorated doublet microtubules (DMTs) in flagellar axoneme. Forms an extensive interaction network in different conformations that reinforces the helix bundle composed by other tektin proteins (TEKT1 to TEKT4) and MIPs to anchor the tektin bundle onto the tubulin wall of A-tubule of the sperm flagellum. The protein is Tektin-5 of Mus musculus (Mouse).